The following is a 727-amino-acid chain: 1,4-alpha-glucan branching enzyme GlgB (727 aa).

Residue Asp-405 is the Nucleophile of the active site. Glu-458 (proton donor) is an active-site residue.

It belongs to the glycosyl hydrolase 13 family. GlgB subfamily. In terms of assembly, monomer.

The catalysed reaction is Transfers a segment of a (1-&gt;4)-alpha-D-glucan chain to a primary hydroxy group in a similar glucan chain.. The protein operates within glycan biosynthesis; glycogen biosynthesis. Functionally, catalyzes the formation of the alpha-1,6-glucosidic linkages in glycogen by scission of a 1,4-alpha-linked oligosaccharide from growing alpha-1,4-glucan chains and the subsequent attachment of the oligosaccharide to the alpha-1,6 position. The protein is 1,4-alpha-glucan branching enzyme GlgB of Yersinia pseudotuberculosis serotype I (strain IP32953).